Consider the following 219-residue polypeptide: Response regulator ArlR (219 aa).

Positions 3 to 116 (NILIVEDEQN…ELFARIRAVL (114 aa)) constitute a Response regulatory domain. Asp52 carries the post-translational modification 4-aspartylphosphate. The segment at residues 122 to 219 (KDIIDINGIK…TVRGVGYVIR (98 aa)) is a DNA-binding region (ompR/PhoB-type).

Post-translationally, phosphorylated by ArlS.

It is found in the cytoplasm. In terms of biological role, member of the two-component regulatory system ArlS/ArlR. This is Response regulator ArlR (arlR) from Staphylococcus haemolyticus (strain JCSC1435).